A 512-amino-acid chain; its full sequence is Glutathione-binding protein GsiB (512 aa).

A signal peptide spans 1 to 26; that stretch reads MTQFITHKWLAALGLASSIAAFPALA.

Belongs to the bacterial solute-binding protein 5 family. As to quaternary structure, the complex is composed of two ATP-binding proteins (GsiA), two transmembrane proteins (GsiC and GsiD) and a solute-binding protein (GsiB).

Its subcellular location is the periplasm. Its function is as follows. Part of the ABC transporter complex GsiABCD involved in glutathione import. Binds glutathione. This Salmonella typhi protein is Glutathione-binding protein GsiB.